The sequence spans 437 residues: Neomycin resistance protein (437 aa).

Disordered stretches follow at residues 161 to 285 (GQRG…EEEA) and 305 to 338 (VSGAGHRVDPLPAPAPGPDRRRHRGRRHGRPVPD). Positions 203-229 (PPTGARSPGATAGARATASTSSSSVRS) are enriched in low complexity. The span at 324–338 (RRRHRGRRHGRPVPD) shows a compositional bias: basic residues.

Belongs to the Gram-positive plasmids replication protein type 1 family.

In Streptomyces cyanogenus, this protein is Neomycin resistance protein.